The following is an 83-amino-acid chain: uncharacterized protein (83 aa).

Transmembrane regions (helical) follow at residues 4 to 24, 32 to 52, and 54 to 74; these read AILS…GVLM, IGNI…LKAF, and YYDL…IIIG.

It localises to the cell membrane. This is an uncharacterized protein from Methanocaldococcus jannaschii (strain ATCC 43067 / DSM 2661 / JAL-1 / JCM 10045 / NBRC 100440) (Methanococcus jannaschii).